The primary structure comprises 636 residues: Threonine--tRNA ligase (636 aa).

Residues 1-63 (MINITTSFPN…SKDGSVDPVT (63 aa)) enclose the TGS domain. Residues 244-535 (DHRKIAKDLG…LIEHYAGNIP (292 aa)) form a catalytic region. 3 residues coordinate Zn(2+): Cys335, His386, and His512.

Belongs to the class-II aminoacyl-tRNA synthetase family. In terms of assembly, homodimer. Requires Zn(2+) as cofactor.

Its subcellular location is the cytoplasm. It carries out the reaction tRNA(Thr) + L-threonine + ATP = L-threonyl-tRNA(Thr) + AMP + diphosphate + H(+). Functionally, catalyzes the attachment of threonine to tRNA(Thr) in a two-step reaction: L-threonine is first activated by ATP to form Thr-AMP and then transferred to the acceptor end of tRNA(Thr). Also edits incorrectly charged L-seryl-tRNA(Thr). This chain is Threonine--tRNA ligase, found in Anaplasma marginale (strain St. Maries).